The primary structure comprises 426 residues: Glutamate-1-semialdehyde 2,1-aminomutase (426 aa).

K267 carries the N6-(pyridoxal phosphate)lysine modification.

Belongs to the class-III pyridoxal-phosphate-dependent aminotransferase family. HemL subfamily. As to quaternary structure, homodimer. The cofactor is pyridoxal 5'-phosphate.

It is found in the cytoplasm. It carries out the reaction (S)-4-amino-5-oxopentanoate = 5-aminolevulinate. Its pathway is porphyrin-containing compound metabolism; protoporphyrin-IX biosynthesis; 5-aminolevulinate from L-glutamyl-tRNA(Glu): step 2/2. The protein is Glutamate-1-semialdehyde 2,1-aminomutase of Bdellovibrio bacteriovorus (strain ATCC 15356 / DSM 50701 / NCIMB 9529 / HD100).